A 527-amino-acid chain; its full sequence is Serine/threonine-protein kinase NLK (527 aa).

2 sufficient for interaction with DAPK3 regions span residues 1–125 and 124–416; these read MSLC…KAHH and HHHQ…SKRI. Required for interaction with TAB2 regions lie at residues 1 to 304 and 434 to 527; these read MSLC…VVTQ and YHTC…LVWE. Disordered stretches follow at residues 22–72 and 90–139; these read AAAA…SSAA and QQPY…LDIE. The span at 26–54 shows a compositional bias: basic residues; it reads GHHHHHHHHLPHLPPPHLHHHHHPQHHLH. Residues 103-119 show a composition bias toward low complexity; that stretch reads PGPAAAAPAQVQAAAAA. A compositionally biased stretch (basic residues) spans 122-131; that stretch reads KAHHHQHSHH. Residues 138–427 form the Protein kinase domain; it reads IEPDRPIGYG…AKDALAHPYL (290 aa). Residues 144-152 and lysine 167 each bind ATP; that span reads IGYGAFGVV. Residue aspartate 264 is the Proton acceptor of the active site. Threonine 298 bears the Phosphothreonine; by autocatalysis mark. Residues 298 to 300 carry the TQE motif; that stretch reads TQE. Residues 428 to 527 form a required for homodimerization and kinase activation and localization to the nucleus region; that stretch reads DEGRLRYHTC…EMPPSPLVWE (100 aa). Serine 522 is subject to Phosphoserine.

It belongs to the protein kinase superfamily. CMGC Ser/Thr protein kinase family. MAP kinase subfamily. In terms of assembly, homodimer. Homodimerization is required for intermolecular autophosphorylation, kinase activation and nuclear localization. Interacts with RNF138/NARF. Interacts with FOXO1 and FOXO3. Interacts with the upstream activating kinases HIPK2 and MAP3K7/TAK1. Interaction with MAP3K7/TAK1 seems to be indirect, and may be mediated by other proteins such as STAT3, TAB1 and TAB2. Interacts with and phosphorylates a number of transcription factors including FOXO4, LEF1, MYB, MYBL1, MYBL2, NOTCH1 and TCF7L2/TCF4. May interact with components of cullin-RING-based SCF (SKP1-CUL1-F-box protein) E3 ubiquitin-protein ligase complexes. Interacts with MEF2A. Interacts with ATF5; the interaction stabilizes ATF5 at the protein level in a kinase-independent manner. The cofactor is Mg(2+). Post-translationally, phosphorylated on Thr-298. Intermolecular autophosphorylation on Thr-298 activates the enzyme. As to expression, expressed at high levels in the brain, and at lower levels in heart, kidney, lung and liver.

Its subcellular location is the nucleus. It is found in the cytoplasm. It carries out the reaction L-seryl-[protein] + ATP = O-phospho-L-seryl-[protein] + ADP + H(+). The enzyme catalyses L-threonyl-[protein] + ATP = O-phospho-L-threonyl-[protein] + ADP + H(+). With respect to regulation, activated by the non-canonical Wnt signaling pathway, in which WNT5A leads to activation of MAP3K7/TAK1 and HIPK2, which subsequently phosphorylates and activates this protein. Activated by dimerization and subsequent intermolecular autophosphorylation on Thr-298. Other cytokines such as IL6 may also activate this regulatory circuit. Functionally, serine/threonine-protein kinase that regulates a number of transcription factors with key roles in cell fate determination. Positive effector of the non-canonical Wnt signaling pathway, acting downstream of WNT5A, MAP3K7/TAK1 and HIPK2. Negative regulator of the canonical Wnt/beta-catenin signaling pathway. Binds to and phosphorylates TCF7L2/TCF4 and LEF1, promoting the dissociation of the TCF7L2/LEF1/beta-catenin complex from DNA, as well as the ubiquitination and subsequent proteolysis of LEF1. Together these effects inhibit the transcriptional activation of canonical Wnt/beta-catenin target genes. Negative regulator of the Notch signaling pathway. Binds to and phosphorylates NOTCH1, thereby preventing the formation of a transcriptionally active ternary complex of NOTCH1, RBPJ/RBPSUH and MAML1. Negative regulator of the MYB family of transcription factors. Phosphorylation of MYB leads to its subsequent proteolysis while phosphorylation of MYBL1 and MYBL2 inhibits their interaction with the coactivator CREBBP. Other transcription factors may also be inhibited by direct phosphorylation of CREBBP itself. Acts downstream of IL6 and MAP3K7/TAK1 to phosphorylate STAT3, which is in turn required for activation of NLK by MAP3K7/TAK1. Upon IL1B stimulus, cooperates with ATF5 to activate the transactivation activity of C/EBP subfamily members. Phosphorylates ATF5 but also stabilizes ATF5 protein levels in a kinase-independent manner. Acts as an inhibitor of the mTORC1 complex in response to osmotic stress by mediating phosphorylation of RPTOR, thereby preventing recruitment of the mTORC1 complex to lysosomes. The polypeptide is Serine/threonine-protein kinase NLK (Mus musculus (Mouse)).